Reading from the N-terminus, the 114-residue chain is Large ribosomal subunit protein bL21c (114 aa).

Belongs to the bacterial ribosomal protein bL21 family. As to quaternary structure, part of the 50S ribosomal subunit.

Its subcellular location is the plastid. The protein resides in the chloroplast. This protein binds to 23S rRNA. The protein is Large ribosomal subunit protein bL21c of Staurastrum punctulatum (Green alga).